A 486-amino-acid chain; its full sequence is Serine/threonine-protein phosphatase 2A 56 kDa regulatory subunit alpha isoform (486 aa).

The span at 1-18 (MSSSSPPAGAASAAISAS) shows a compositional bias: low complexity. Positions 1-52 (MSSSSPPAGAASAAISASEKVDGFTRKSVRKAQRQKRSQGSSQFRSQGSQAE) are disordered. Ser2 carries the post-translational modification N-acetylserine. Positions 27–37 (KSVRKAQRQKR) are enriched in basic residues. Residues 38-51 (SQGSSQFRSQGSQA) are compositionally biased toward low complexity. 3 positions are modified to phosphoserine: Ser41, Ser42, and Ser49.

The protein belongs to the phosphatase 2A regulatory subunit B56 family. PP2A consists of a common heterodimeric core enzyme, composed of a 36 kDa catalytic subunit (subunit C) and a 65 kDa constant regulatory subunit (PR65 or subunit A), that associates with a variety of regulatory subunits. Proteins that associate with the core dimer include three families of regulatory subunits B (the R2/B/PR55/B55, R3/B''/PR72/PR130/PR59 and R5/B'/B56 families), the 48 kDa variable regulatory subunit, viral proteins, and cell signaling molecules. Interacts with SGO1. Post-translationally, phosphorylated on serine residues. Widely expressed with the highest expression in heart and skeletal muscle.

The protein localises to the cytoplasm. It is found in the nucleus. Its subcellular location is the chromosome. It localises to the centromere. The B regulatory subunit might modulate substrate selectivity and catalytic activity, and might also direct the localization of the catalytic enzyme to a particular subcellular compartment. The protein is Serine/threonine-protein phosphatase 2A 56 kDa regulatory subunit alpha isoform (PPP2R5A) of Homo sapiens (Human).